A 534-amino-acid polypeptide reads, in one-letter code: CTP synthase (534 aa).

Positions 1–269 (MHVSNSKFIF…DKIIIDAFRL (269 aa)) are amidoligase domain. Position 17 (serine 17) interacts with CTP. A UTP-binding site is contributed by serine 17. ATP is bound at residue 18–23 (SLGKGV). Tyrosine 58 lines the L-glutamine pocket. Residue aspartate 75 participates in ATP binding. Mg(2+) contacts are provided by aspartate 75 and glutamate 143. Residues 150–152 (DIE), 190–195 (KTKPTQ), and lysine 226 contribute to the CTP site. UTP-binding positions include 190-195 (KTKPTQ) and lysine 226. The region spanning 294–532 (DIAIVGKYIK…IENAYIYKKE (239 aa)) is the Glutamine amidotransferase type-1 domain. Position 352 (glycine 352) interacts with L-glutamine. The Nucleophile; for glutamine hydrolysis role is filled by cysteine 379. L-glutamine contacts are provided by residues 380 to 383 (LGMQ), glutamate 403, and arginine 460. Residues histidine 505 and glutamate 507 contribute to the active site.

The protein belongs to the CTP synthase family. In terms of assembly, homotetramer.

It carries out the reaction UTP + L-glutamine + ATP + H2O = CTP + L-glutamate + ADP + phosphate + 2 H(+). The catalysed reaction is L-glutamine + H2O = L-glutamate + NH4(+). The enzyme catalyses UTP + NH4(+) + ATP = CTP + ADP + phosphate + 2 H(+). The protein operates within pyrimidine metabolism; CTP biosynthesis via de novo pathway; CTP from UDP: step 2/2. Allosterically activated by GTP, when glutamine is the substrate; GTP has no effect on the reaction when ammonia is the substrate. The allosteric effector GTP functions by stabilizing the protein conformation that binds the tetrahedral intermediate(s) formed during glutamine hydrolysis. Inhibited by the product CTP, via allosteric rather than competitive inhibition. Catalyzes the ATP-dependent amination of UTP to CTP with either L-glutamine or ammonia as the source of nitrogen. Regulates intracellular CTP levels through interactions with the four ribonucleotide triphosphates. The protein is CTP synthase of Hydrogenobaculum sp. (strain Y04AAS1).